The sequence spans 151 residues: UPF0178 protein CJA_1978 (151 aa).

It belongs to the UPF0178 family.

The chain is UPF0178 protein CJA_1978 from Cellvibrio japonicus (strain Ueda107) (Pseudomonas fluorescens subsp. cellulosa).